An 837-amino-acid polypeptide reads, in one-letter code: Phosphatidylinositol-glycan-specific phospholipase D (837 aa).

The signal sequence occupies residues 1 to 23; the sequence is MSAGRLWSSLLLLLPLFCSKSSS. Residues Asn94, Asn267, Asn287, Asn303, and Asn317 are each glycosylated (N-linked (GlcNAc...) asparagine). FG-GAP repeat units lie at residues 364–425, 431–492, 494–554, 561–619, 629–689, 701–767, and 785–837; these read SPSA…GLPP, NKEG…GRLS, SPNV…RNDK, EADW…SLGK, QSTI…GATR, ALLS…TLGD, and QYVL…FSSD. 5 N-linked (GlcNAc...) asparagine glycosylation sites follow: Asn477, Asn496, Asn586, Asn599, and Asn655.

It belongs to the GPLD1 family. Monomer. In terms of tissue distribution, widely expressed.

It is found in the secreted. The catalysed reaction is a 6-(alpha-D-glucosaminyl)-1-(1,2-diacyl-sn-glycero-3-phospho)-1D-myo-inositol + H2O = 6-(alpha-D-glucosaminyl)-1D-myo-inositol + a 1,2-diacyl-sn-glycero-3-phosphate + H(+). In terms of biological role, this protein hydrolyzes the inositol phosphate linkage in proteins anchored by phosphatidylinositol glycans (GPI-anchor) thus releasing these proteins from the membrane. The chain is Phosphatidylinositol-glycan-specific phospholipase D (Gpld1) from Mus musculus (Mouse).